The primary structure comprises 208 residues: Small ribosomal subunit protein eS8 (208 aa).

Residues 1–33 (MGISRDHWHKRRATGGKRKPIRKKRKFELGRPA) form a disordered region. Basic residues predominate over residues 7–26 (HWHKRRATGGKRKPIRKKRK).

Belongs to the eukaryotic ribosomal protein eS8 family.

This is Small ribosomal subunit protein eS8 (RpS8) from Apis mellifera (Honeybee).